Here is a 242-residue protein sequence, read N- to C-terminus: Ditrans,polycis-undecaprenyl-diphosphate synthase ((2E,6E)-farnesyl-diphosphate specific) (242 aa).

Residue Asp-21 is part of the active site. Mg(2+) is bound at residue Asp-21. Residues Gly-22–Arg-25, Trp-26, Arg-34, His-38, and Ser-66–Glu-68 each bind substrate. The active-site Proton acceptor is Asn-69. Substrate is bound by residues Trp-70, Arg-72, Arg-189, and Arg-195–Ser-197. Position 208 (Glu-208) interacts with Mg(2+).

The protein belongs to the UPP synthase family. Homodimer. It depends on Mg(2+) as a cofactor.

It catalyses the reaction 8 isopentenyl diphosphate + (2E,6E)-farnesyl diphosphate = di-trans,octa-cis-undecaprenyl diphosphate + 8 diphosphate. Functionally, catalyzes the sequential condensation of isopentenyl diphosphate (IPP) with (2E,6E)-farnesyl diphosphate (E,E-FPP) to yield (2Z,6Z,10Z,14Z,18Z,22Z,26Z,30Z,34E,38E)-undecaprenyl diphosphate (di-trans,octa-cis-UPP). UPP is the precursor of glycosyl carrier lipid in the biosynthesis of bacterial cell wall polysaccharide components such as peptidoglycan and lipopolysaccharide. This is Ditrans,polycis-undecaprenyl-diphosphate synthase ((2E,6E)-farnesyl-diphosphate specific) from Haemophilus ducreyi (strain 35000HP / ATCC 700724).